A 152-amino-acid polypeptide reads, in one-letter code: UPF0266 membrane protein YobD (152 aa).

3 consecutive transmembrane segments (helical) span residues 6 to 26, 45 to 65, and 67 to 87; these read LVLI…QFIM, VDSV…VTSH, and AQMT…IFWI.

Belongs to the UPF0266 family.

It localises to the cell inner membrane. This chain is UPF0266 membrane protein YobD, found in Salmonella dublin (strain CT_02021853).